A 69-amino-acid polypeptide reads, in one-letter code: Dermaseptin-H3 (69 aa).

The first 22 residues, 1–22, serve as a signal peptide directing secretion; sequence MAFLKKSLFLVLFLGMVSLSIC. A propeptide spanning residues 23–43 is cleaved from the precursor; that stretch reads EEEKRENEDEEKQEDDEQSEM. Positions 24 to 44 are disordered; it reads EEKRENEDEEKQEDDEQSEMK. A compositionally biased stretch (acidic residues) spans 30–40; that stretch reads EDEEKQEDDEQ. A Leucine amide modification is found at L66. Residues 68-69 constitute a propeptide that is removed on maturation; it reads EQ.

It belongs to the frog skin active peptide (FSAP) family. Dermaseptin subfamily. In terms of tissue distribution, expressed by the skin glands.

Its subcellular location is the secreted. In terms of biological role, possesses a potent antimicrobial activity against Gram-positive and Gram-negative bacteria. Probably acts by disturbing membrane functions with its amphipathic structure. This Pithecopus azureus (Orange-legged monkey tree frog) protein is Dermaseptin-H3.